The chain runs to 135 residues: uncharacterized protein (135 aa).

Transmembrane regions (helical) follow at residues isoleucine 20–leucine 40 and isoleucine 47–threonine 67.

The protein belongs to the plectrovirus ORF5 family.

It is found in the host membrane. This is an uncharacterized protein from Spiroplasma virus SpV1-C74 (SpV1).